The following is a 341-amino-acid chain: Ribosomal RNA small subunit methyltransferase H (341 aa).

S-adenosyl-L-methionine contacts are provided by residues Gly47 to Tyr49, Asp64, Phe91, Asp109, and Gln116.

Belongs to the methyltransferase superfamily. RsmH family.

It localises to the cytoplasm. The catalysed reaction is cytidine(1402) in 16S rRNA + S-adenosyl-L-methionine = N(4)-methylcytidine(1402) in 16S rRNA + S-adenosyl-L-homocysteine + H(+). Specifically methylates the N4 position of cytidine in position 1402 (C1402) of 16S rRNA. This chain is Ribosomal RNA small subunit methyltransferase H, found in Rhizobium johnstonii (strain DSM 114642 / LMG 32736 / 3841) (Rhizobium leguminosarum bv. viciae).